The sequence spans 153 residues: Histone H2B.6 (153 aa).

2 stretches are compositionally biased toward basic and acidic residues: residues 1 to 28 (MAPK…EKAP) and 36 to 53 (EKRL…EGKK). The interval 1 to 60 (MAPKAEKKPAAKKPAEEEPAAEKAEKAPAGKKPKAEKRLPAGKGEKGSGEGKKAGRKKGK) is disordered. Residues Lys-7 and Lys-37 each carry the N6-acetyllysine modification. Residue Lys-149 forms a Glycyl lysine isopeptide (Lys-Gly) (interchain with G-Cter in ubiquitin) linkage.

The protein belongs to the histone H2B family. In terms of assembly, the nucleosome is a histone octamer containing two molecules each of H2A, H2B, H3 and H4 assembled in one H3-H4 heterotetramer and two H2A-H2B heterodimers. The octamer wraps approximately 147 bp of DNA. Can be acetylated to form H2BK6ac and H2BK33ac. In terms of processing, monoubiquitinated by BRE1 to form H2BK143ub1 and deubiquitinated by UBP26. Required for heterochromatic histone H3 di- and trimethylation at H3K4me. May give a specific tag for epigenetic transcriptional activation.

It is found in the nucleus. The protein resides in the chromosome. In terms of biological role, core component of nucleosome. Nucleosomes wrap and compact DNA into chromatin, limiting DNA accessibility to the cellular machineries which require DNA as a template. Histones thereby play a central role in transcription regulation, DNA repair, DNA replication and chromosomal stability. DNA accessibility is regulated via a complex set of post-translational modifications of histones, also called histone code, and nucleosome remodeling. The protein is Histone H2B.6 (H2B.6) of Oryza sativa subsp. japonica (Rice).